A 63-amino-acid chain; its full sequence is Large ribosomal subunit protein uL29 (63 aa).

This sequence belongs to the universal ribosomal protein uL29 family.

This chain is Large ribosomal subunit protein uL29, found in Shewanella frigidimarina (strain NCIMB 400).